We begin with the raw amino-acid sequence, 394 residues long: ATP phosphoribosyltransferase regulatory subunit (394 aa).

It belongs to the class-II aminoacyl-tRNA synthetase family. HisZ subfamily. In terms of assembly, heteromultimer composed of HisG and HisZ subunits.

The protein localises to the cytoplasm. It participates in amino-acid biosynthesis; L-histidine biosynthesis; L-histidine from 5-phospho-alpha-D-ribose 1-diphosphate: step 1/9. Functionally, required for the first step of histidine biosynthesis. May allow the feedback regulation of ATP phosphoribosyltransferase activity by histidine. The protein is ATP phosphoribosyltransferase regulatory subunit of Geobacillus thermodenitrificans (strain NG80-2).